The primary structure comprises 66 residues: UPF0370 protein YpfN (66 aa).

A helical membrane pass occupies residues 4–24; it reads LAKYWWILVLVFLVGVLLNVI. The disordered stretch occupies residues 39–66; sequence KPELPPHRDFNDKWDDEDDWPKKDQSKK. A compositionally biased stretch (basic and acidic residues) spans 42–51; sequence LPPHRDFNDK.

It belongs to the UPF0370 family.

It is found in the cell membrane. This is UPF0370 protein YpfN from Salmonella arizonae (strain ATCC BAA-731 / CDC346-86 / RSK2980).